A 1281-amino-acid chain; its full sequence is Dynactin subunit 1 (1281 aa).

A disordered region spans residues 1 to 26 (MAQSRRHMSSRTPSGSRMSTEASARP). Over residues 10-22 (SRTPSGSRMSTEA) the composition is skewed to polar residues. The 43-residue stretch at 48-90 (GATLFATGKWVGVILDEAKGKNDGTVQGRKYFTCDEGHGIFVR) folds into the CAP-Gly domain. The tract at residues 100–221 (GADTTSPETP…SPSKEEEGLR (122 aa)) is disordered. Residues 102-114 (DTTSPETPDSSAS) are compositionally biased toward polar residues. A phosphothreonine mark is found at Thr108, Thr145, Thr146, and Thr147. Over residues 129 to 152 (SKLRGLKPKKAPTARKTTTRRPKP) the composition is skewed to basic residues. A compositionally biased stretch (low complexity) spans 161 to 205 (AGPSSSLGPSGSASAGELSSSEPSTPAQTPLAAPIIPTPALTSPG). Ser179 is modified (phosphoserine; by PLK1). The residue at position 212 (Ser212) is a Phosphoserine; by CDK1. Coiled coils occupy residues 214-547 (SKEE…RQQQ), 943-1049 (LKLE…EGLR), and 1185-1214 (SAQL…KETV). Positions 911 to 1281 (EYDAERPPSK…LHQLHSRLIS (371 aa)) are interaction with HPS6.

It belongs to the dynactin 150 kDa subunit family. Monomer and homodimer. Subunit of dynactin, a multiprotein complex part of a tripartite complex with dynein and a adapter, such as BICDL1, BICD2 or HOOK3. The dynactin complex is built around ACTR1A/ACTB filament and consists of an actin-related filament composed of a shoulder domain, a pointed end and a barbed end. Its length is defined by its flexible shoulder domain. The soulder is composed of 2 DCTN1 subunits, 4 DCTN2 and 2 DCTN3. DCTN1/p150(glued) binds directly to microtubules and to cytoplasmic dynein. The 4 DCNT2 (via N-terminus) bind the ACTR1A filament and act as molecular rulers to determine the length. The pointed end is important for binding dynein-dynactin cargo adapters. Consists of 4 subunits: ACTR10, DCNT4, DCTN5 and DCTN6. The barbed end is composed of a CAPZA1:CAPZB heterodimers, which binds ACTR1A/ACTB filament and dynactin and stabilizes dynactin. Interacts with the C-terminus of MAPRE1, MAPRE2 and MAPRE3. Interacts with FBXL5. Interacts with ECPAS. Interacts with CLIP1. Interacts with CLN3 and DYNAP. Interacts with MISP; this interaction regulates its distribution at the cell cortex. Interacts with CEP131. Interacts with CEP126. Interacts with dynein intermediate chain and dynein heavy chain. Interacts with PLK1 (via POLO-box domain). Interacts with TBCB and PARD6A. Binds preferentially to tyrosinated microtubules than to detyrosinated microtubules. Interacts with KIF3A. Interacts with HPS6. Interacts with SNX6. Interacts with BICD2. Interacts with DST (isoform 1). Identified in a complex with MREG and RILP. Interacts with BCCIP. Interacts with DCDC1. Interacts with AKNA. Interacts with DYNC1I2. Interacts with RUFY3 and RUFY4. In terms of processing, ubiquitinated by a SCF complex containing FBXL5, leading to its degradation by the proteasome. Post-translationally, phosphorylation by SLK at Thr-145, Thr-146 and Thr-147 targets DCTN1 to the centrosome. It is uncertain if SLK phosphorylates all three threonines or one or two of them. PLK1-mediated phosphorylation at Ser-179 is essential for its localization in the nuclear envelope and promotes its dissociation from microtubules during early mitosis and positively regulates nuclear envelope breakdown during prophase.

It is found in the cytoplasm. The protein resides in the cytoskeleton. The protein localises to the microtubule organizing center. It localises to the centrosome. Its subcellular location is the centriole. It is found in the spindle. The protein resides in the nucleus envelope. The protein localises to the cell cortex. Part of the dynactin complex that activates the molecular motor dynein for ultra-processive transport along microtubules. Plays a key role in dynein-mediated retrograde transport of vesicles and organelles along microtubules by recruiting and tethering dynein to microtubules. Binds to both dynein and microtubules providing a link between specific cargos, microtubules and dynein. Essential for targeting dynein to microtubule plus ends, recruiting dynein to membranous cargos and enhancing dynein processivity (the ability to move along a microtubule for a long distance without falling off the track). Can also act as a brake to slow the dynein motor during motility along the microtubule. Can regulate microtubule stability by promoting microtubule formation, nucleation and polymerization and by inhibiting microtubule catastrophe in neurons. Inhibits microtubule catastrophe by binding both to microtubules and to tubulin, leading to enhanced microtubule stability along the axon. Plays a role in metaphase spindle orientation. Plays a role in centriole cohesion and subdistal appendage organization and function. Its recruitment to the centriole in a KIF3A-dependent manner is essential for the maintenance of centriole cohesion and the formation of subdistal appendage. Also required for microtubule anchoring at the mother centriole. Plays a role in primary cilia formation. The protein is Dynactin subunit 1 (Dctn1) of Mus musculus (Mouse).